We begin with the raw amino-acid sequence, 179 residues long: Replication restart protein DnaT (179 aa).

Residues 156–179 form a disordered region; the sequence is GGLPKRDVNTVSEPDSQIPPGFRG.

It belongs to the DnaT family. Homooligomerizes. Interacts with PriB. Component of the replication restart primosome. Primosome assembly occurs via a 'hand-off' mechanism. PriA binds to replication forks, subsequently PriB then DnaT bind; DnaT then displaces ssDNA to generate the helicase loading substrate.

Involved in the restart of stalled replication forks, which reloads the replicative helicase on sites other than the origin of replication. Can function in multiple replication restart pathways. Displaces ssDNA from a PriB-ssDNA complex. Probably forms a spiral filament on ssDNA. The sequence is that of Replication restart protein DnaT from Escherichia coli O7:K1 (strain IAI39 / ExPEC).